A 238-amino-acid chain; its full sequence is Probable xyloglucan-specific endo-beta-1,4-glucanase A (238 aa).

The N-terminal stretch at 1–18 (MKFSLSVALSLAAATAQA) is a signal peptide. 2 N-linked (GlcNAc...) asparagine glycosylation sites follow: Asn106 and Asn171.

The protein belongs to the glycosyl hydrolase 12 (cellulase H) family.

The protein resides in the secreted. It carries out the reaction xyloglucan + H2O = xyloglucan oligosaccharides.. In terms of biological role, catalyzes endohydrolysis of 1,4-beta-D-glucosidic linkages in xyloglucan with retention of the beta-configuration of the glycosyl residues. Specific for xyloglucan and does not hydrolyze other cell wall components. The chain is Probable xyloglucan-specific endo-beta-1,4-glucanase A (xgeA) from Neosartorya fischeri (strain ATCC 1020 / DSM 3700 / CBS 544.65 / FGSC A1164 / JCM 1740 / NRRL 181 / WB 181) (Aspergillus fischerianus).